A 547-amino-acid polypeptide reads, in one-letter code: Dihydrolipoyllysine-residue acetyltransferase component of pyruvate dehydrogenase complex (547 aa).

Residues 2–75 (SELIRVPDIG…KEGDEILELE (74 aa)) enclose the Lipoyl-binding 1 domain. At lysine 41 the chain carries N6-lipoyllysine. The disordered stretch occupies residues 75–117 (EVEGGEQPAEAKAEAAPAQPEAPKAEAPAPAPSESKPAAPAAA). A compositionally biased stretch (low complexity) spans 80–117 (EQPAEAKAEAAPAQPEAPKAEAPAPAPSESKPAAPAAA). The Lipoyl-binding 2 domain occupies 119–193 (VQDIKVPDIG…GTGDLILKLK (75 aa)). At lysine 159 the chain carries N6-lipoyllysine. Positions 202-231 (EEQPAAAPAQAAAPAAEQKPAAAAPAPAKA) are enriched in low complexity. Residues 202 to 248 (EEQPAAAPAQAAAPAAEQKPAAAAPAPAKADTPAPVGAPSRDGAKVH) form a disordered region. The region spanning 248–285 (HAGPAVRMLAREFGVELSEVKASGPKGRILKEDVQVFV) is the Peripheral subunit-binding (PSBD) domain. Histidine 520 is a catalytic residue.

Belongs to the 2-oxoacid dehydrogenase family. Forms a 24-polypeptide structural core with octahedral symmetry. It depends on (R)-lipoate as a cofactor.

The enzyme catalyses N(6)-[(R)-dihydrolipoyl]-L-lysyl-[protein] + acetyl-CoA = N(6)-[(R)-S(8)-acetyldihydrolipoyl]-L-lysyl-[protein] + CoA. In terms of biological role, the pyruvate dehydrogenase complex catalyzes the overall conversion of pyruvate to acetyl-CoA and CO(2). It contains multiple copies of three enzymatic components: pyruvate dehydrogenase (E1), dihydrolipoamide acetyltransferase (E2) and lipoamide dehydrogenase (E3). The chain is Dihydrolipoyllysine-residue acetyltransferase component of pyruvate dehydrogenase complex (aceF) from Pseudomonas aeruginosa (strain ATCC 15692 / DSM 22644 / CIP 104116 / JCM 14847 / LMG 12228 / 1C / PRS 101 / PAO1).